Here is a 385-residue protein sequence, read N- to C-terminus: Glucose-fructose oxidoreductase domain-containing protein 2 (385 aa).

The N-terminal stretch at 1–25 is a signal peptide; it reads MKLLPGVGVFGTGSSARVLVPLLRA.

Belongs to the Gfo/Idh/MocA family.

The protein resides in the secreted. The protein localises to the extracellular space. Its subcellular location is the extracellular matrix. Promotes matrix assembly. The polypeptide is Glucose-fructose oxidoreductase domain-containing protein 2 (Gfod2) (Mus musculus (Mouse)).